The following is a 224-amino-acid chain: Serum amyloid P-component (224 aa).

Positions 1-19 (MERLLLWVSVLASLPEAFA) are cleaved as a signal peptide. In terms of domain architecture, Pentraxin (PTX) spans 24 to 224 (TGKVFVFPRE…YVVIKPRVWS (201 aa)). Residue Asn-51 is glycosylated (N-linked (GlcNAc...) asparagine). A disulfide bridge links Cys-55 with Cys-114. Positions 77, 78, 155, 156, 157, and 167 each coordinate Ca(2+).

Belongs to the pentraxin family. In terms of assembly, homopentamer. Pentraxin (or pentaxin) have a discoid arrangement of 5 non-covalently bound subunits. Requires Ca(2+) as cofactor.

The protein localises to the secreted. The chain is Serum amyloid P-component (APCS) from Sus scrofa (Pig).